A 201-amino-acid polypeptide reads, in one-letter code: Holliday junction branch migration complex subunit RuvA (201 aa).

The domain I stretch occupies residues 1–64 (MFAFLRGELV…EDAQQLFGFL (64 aa)). The interval 65–143 (DEEELQLFRL…KIQPAASGKT (79 aa)) is domain II. The tract at residues 144–154 (AGAPQALQLNE) is flexible linker. A domain III region spans residues 154–201 (EDALAALMTLGFPKPAAQKAISGILETSPGLSVEEVVRAALIAIHNNF).

It belongs to the RuvA family. Homotetramer. Forms an RuvA(8)-RuvB(12)-Holliday junction (HJ) complex. HJ DNA is sandwiched between 2 RuvA tetramers; dsDNA enters through RuvA and exits via RuvB. An RuvB hexamer assembles on each DNA strand where it exits the tetramer. Each RuvB hexamer is contacted by two RuvA subunits (via domain III) on 2 adjacent RuvB subunits; this complex drives branch migration. In the full resolvosome a probable DNA-RuvA(4)-RuvB(12)-RuvC(2) complex forms which resolves the HJ.

The protein resides in the cytoplasm. Its function is as follows. The RuvA-RuvB-RuvC complex processes Holliday junction (HJ) DNA during genetic recombination and DNA repair, while the RuvA-RuvB complex plays an important role in the rescue of blocked DNA replication forks via replication fork reversal (RFR). RuvA specifically binds to HJ cruciform DNA, conferring on it an open structure. The RuvB hexamer acts as an ATP-dependent pump, pulling dsDNA into and through the RuvAB complex. HJ branch migration allows RuvC to scan DNA until it finds its consensus sequence, where it cleaves and resolves the cruciform DNA. The polypeptide is Holliday junction branch migration complex subunit RuvA (Chlorobaculum tepidum (strain ATCC 49652 / DSM 12025 / NBRC 103806 / TLS) (Chlorobium tepidum)).